The following is a 1792-amino-acid chain: BTB/POZ domain-containing protein 8 (1792 aa).

2 BTB domains span residues 58 to 127 (TDVT…NIKN) and 206 to 273 (PDID…DIPD). 8 disordered regions span residues 528 to 554 (DKGDDRRLGKKPIFSSSQQRKQVSDSG), 581 to 658 (SDGL…PRQV), 670 to 692 (TGQKNLLNGKGVRNQEGQISGAR), 707 to 768 (KPLK…CDSP), 788 to 815 (SRPVSRVTNGTSNKKSIHEQDTNVNNSV), 831 to 989 (AILK…KPHK), 1151 to 1283 (ERTN…SNDR), and 1519 to 1607 (SIDS…KSLD). Polar residues-rich tracts occupy residues 541–552 (FSSSQQRKQVSD) and 588–601 (GHSSSTNRNSINKT). 2 stretches are compositionally biased toward basic and acidic residues: residues 602 to 625 (LKQDDVKEKDGTKIASKITKELKT) and 640 to 650 (SKTENGDKARL). The segment covering 724–740 (GPSSRSTDSSMEFSIST) has biased composition (polar residues). Residues 744-758 (DEPKENGSTEEEKPS) are compositionally biased toward basic and acidic residues. The segment covering 838–865 (TSNGCTAAQQRTKSTPSNLTKTQGSQGE) has biased composition (polar residues). The span at 866–877 (SPNSVKSSVSSR) shows a compositional bias: low complexity. 2 stretches are compositionally biased toward basic and acidic residues: residues 878-891 (QSDENVAKLDHNTT) and 927-939 (KKGETLNNKDSKQ). The segment covering 947-956 (ISKTQPSSQR) has biased composition (polar residues). Residues 969–987 (MFHDVRDNNNKDSVSEQKP) show a composition bias toward basic and acidic residues. Polar residues-rich tracts occupy residues 1151–1160 (ERTNGTLNSA) and 1195–1215 (SDVSSKCFSGQLSEKNSPKNM). A compositionally biased stretch (low complexity) spans 1250-1259 (SDTGSATTSS). Positions 1566–1594 (IQQRSKFLDSDVKSQERPCHLDLHQREPN) are enriched in basic and acidic residues. Positions 1597–1607 (IPKNSSTKSLD) are enriched in polar residues.

Interacts (via N-terminus) with adapter protein complex AP-2 subunits alpha (AP2A1) and beta (AP2B1). Highly expressed in fetal brain. Weakly expressed in adult brain and prostate.

The protein localises to the cell projection. It is found in the axon. It localises to the presynapse. The protein resides in the cytoplasmic vesicle. Its subcellular location is the clathrin-coated vesicle. The protein localises to the nucleus. In terms of biological role, involved in clathrin-mediated endocytosis at the synapse. Plays a role in neuronal development and in synaptic vesicle recycling in mature neurons, a process required for normal synaptic transmission. This chain is BTB/POZ domain-containing protein 8, found in Homo sapiens (Human).